Consider the following 445-residue polypeptide: Enolase 1 (445 aa).

Substrate is bound by residues H164 and E173. E216 (proton donor) is an active-site residue. D251, E301, and D328 together coordinate Mg(2+). 2 residues coordinate substrate: E301 and D328. The active-site Proton acceptor is K353. Substrate-binding positions include 380-383 (SHRS) and K404.

This sequence belongs to the enolase family. Homodimer. Requires Mg(2+) as cofactor.

Its subcellular location is the cytoplasm. The catalysed reaction is (2R)-2-phosphoglycerate = phosphoenolpyruvate + H2O. It participates in carbohydrate degradation; glycolysis; pyruvate from D-glyceraldehyde 3-phosphate: step 4/5. This chain is Enolase 1 (ENO1), found in Hevea brasiliensis (Para rubber tree).